The following is a 310-amino-acid chain: Ribosomal RNA small subunit methyltransferase H (310 aa).

Residues 33–35 (AGH), Asp-53, Phe-79, Asp-100, and Gln-107 each bind S-adenosyl-L-methionine.

It belongs to the methyltransferase superfamily. RsmH family.

It is found in the cytoplasm. The enzyme catalyses cytidine(1402) in 16S rRNA + S-adenosyl-L-methionine = N(4)-methylcytidine(1402) in 16S rRNA + S-adenosyl-L-homocysteine + H(+). Specifically methylates the N4 position of cytidine in position 1402 (C1402) of 16S rRNA. This chain is Ribosomal RNA small subunit methyltransferase H, found in Clostridium beijerinckii (strain ATCC 51743 / NCIMB 8052) (Clostridium acetobutylicum).